A 415-amino-acid polypeptide reads, in one-letter code: Imidazolonepropionase (415 aa).

Positions 76 and 78 each coordinate Fe(3+). 2 residues coordinate Zn(2+): His76 and His78. 4-imidazolone-5-propanoate contacts are provided by Arg85, Tyr148, and His181. Tyr148 is an N-formimidoyl-L-glutamate binding site. Position 246 (His246) interacts with Fe(3+). His246 provides a ligand contact to Zn(2+). Glu249 contacts 4-imidazolone-5-propanoate. Fe(3+) is bound at residue Asp320. Asp320 is a Zn(2+) binding site. 2 residues coordinate N-formimidoyl-L-glutamate: Asn322 and Gly324. Residue Thr325 participates in 4-imidazolone-5-propanoate binding.

Belongs to the metallo-dependent hydrolases superfamily. HutI family. Zn(2+) serves as cofactor. Requires Fe(3+) as cofactor.

The protein resides in the cytoplasm. It carries out the reaction 4-imidazolone-5-propanoate + H2O = N-formimidoyl-L-glutamate. Its pathway is amino-acid degradation; L-histidine degradation into L-glutamate; N-formimidoyl-L-glutamate from L-histidine: step 3/3. Functionally, catalyzes the hydrolytic cleavage of the carbon-nitrogen bond in imidazolone-5-propanoate to yield N-formimidoyl-L-glutamate. It is the third step in the universal histidine degradation pathway. In Thermoanaerobacter pseudethanolicus (strain ATCC 33223 / 39E) (Clostridium thermohydrosulfuricum), this protein is Imidazolonepropionase.